The primary structure comprises 143 residues: UPF0179 protein PTO0851 (143 aa).

It belongs to the UPF0179 family.

In Picrophilus torridus (strain ATCC 700027 / DSM 9790 / JCM 10055 / NBRC 100828 / KAW 2/3), this protein is UPF0179 protein PTO0851.